The following is a 111-amino-acid chain: V-type proton ATPase subunit G 2 (111 aa).

The protein belongs to the V-ATPase G subunit family. V-ATPase is a heteromultimeric enzyme composed of a peripheral catalytic V1 complex (components A to H) attached to an integral membrane V0 proton pore complex (components: a, c, c', c'' and d).

Functionally, catalytic subunit of the peripheral V1 complex of vacuolar ATPase (V-ATPase). V-ATPase is responsible for acidifying a variety of intracellular compartments in eukaryotic cells. In Nicotiana tabacum (Common tobacco), this protein is V-type proton ATPase subunit G 2 (VATG2).